Consider the following 346-residue polypeptide: D-fructose 1,6-bisphosphatase class 2/sedoheptulose 1,7-bisphosphatase 1 (346 aa).

Mn(2+) is bound by residues D33, E57, D97, and E100. Substrate contacts are provided by residues E100–T102, Y131, R176–R178, and D198–D200. E225 serves as a coordination point for Mn(2+).

The protein belongs to the FBPase class 2 family. Homotetramer. The cofactor is Mn(2+).

The catalysed reaction is beta-D-fructose 1,6-bisphosphate + H2O = beta-D-fructose 6-phosphate + phosphate. It carries out the reaction D-sedoheptulose 1,7-bisphosphate + H2O = D-sedoheptulose 7-phosphate + phosphate. Its pathway is carbohydrate biosynthesis; Calvin cycle. In terms of biological role, catalyzes the hydrolysis of fructose 1,6-bisphosphate (Fru 1,6-P2) and sedoheptulose 1,7-bisphosphate (Sed 1,7-P2) to fructose 6-phosphate and sedoheptulose 7-phosphate, respectively. This is D-fructose 1,6-bisphosphatase class 2/sedoheptulose 1,7-bisphosphatase 1 from Acaryochloris marina (strain MBIC 11017).